A 101-amino-acid polypeptide reads, in one-letter code: NAD(P)H-quinone oxidoreductase subunit 4L, chloroplastic (101 aa).

Helical transmembrane passes span 2–22, 32–52, and 61–81; these read MTEH…YGLI, MCLE…SDLF, and IFSI…PAIV.

This sequence belongs to the complex I subunit 4L family. NDH is composed of at least 16 different subunits, 5 of which are encoded in the nucleus.

The protein localises to the plastid. It localises to the chloroplast thylakoid membrane. The enzyme catalyses a plastoquinone + NADH + (n+1) H(+)(in) = a plastoquinol + NAD(+) + n H(+)(out). It carries out the reaction a plastoquinone + NADPH + (n+1) H(+)(in) = a plastoquinol + NADP(+) + n H(+)(out). NDH shuttles electrons from NAD(P)H:plastoquinone, via FMN and iron-sulfur (Fe-S) centers, to quinones in the photosynthetic chain and possibly in a chloroplast respiratory chain. The immediate electron acceptor for the enzyme in this species is believed to be plastoquinone. Couples the redox reaction to proton translocation, and thus conserves the redox energy in a proton gradient. This chain is NAD(P)H-quinone oxidoreductase subunit 4L, chloroplastic, found in Liriodendron tulipifera (Tuliptree).